We begin with the raw amino-acid sequence, 557 residues long: Aerobic glycerol-3-phosphate dehydrogenase (557 aa).

21–49 serves as a coordination point for FAD; that stretch reads DLVIIGGGITGAGIALDASERGMKVALVE.

It belongs to the FAD-dependent glycerol-3-phosphate dehydrogenase family. Requires FAD as cofactor.

The protein resides in the cytoplasm. It catalyses the reaction a quinone + sn-glycerol 3-phosphate = dihydroxyacetone phosphate + a quinol. Its pathway is polyol metabolism; glycerol degradation via glycerol kinase pathway; glycerone phosphate from sn-glycerol 3-phosphate (aerobic route): step 1/1. In Staphylococcus aureus (strain bovine RF122 / ET3-1), this protein is Aerobic glycerol-3-phosphate dehydrogenase (glpD).